The sequence spans 177 residues: Alkyl hydroperoxide reductase AhpD (177 aa).

C131 serves as the catalytic Proton donor. Cysteines 131 and 134 form a disulfide. C134 serves as the catalytic Cysteine sulfenic acid (-SOH) intermediate.

The protein belongs to the AhpD family. As to quaternary structure, homotrimer.

It carries out the reaction N(6)-[(R)-dihydrolipoyl]-L-lysyl-[lipoyl-carrier protein] + a hydroperoxide = N(6)-[(R)-lipoyl]-L-lysyl-[lipoyl-carrier protein] + an alcohol + H2O. In terms of biological role, antioxidant protein with alkyl hydroperoxidase activity. Required for the reduction of the AhpC active site cysteine residues and for the regeneration of the AhpC enzyme activity. This Streptomyces avermitilis (strain ATCC 31267 / DSM 46492 / JCM 5070 / NBRC 14893 / NCIMB 12804 / NRRL 8165 / MA-4680) protein is Alkyl hydroperoxide reductase AhpD.